The following is a 2211-amino-acid chain: Nonribosomal peptide synthetase 13 (2211 aa).

Residues threonine 76–proline 475 are adenylation 1. Positions proline 594–glutamine 671 constitute a Carrier 1 domain. An O-(pantetheine 4'-phosphoryl)serine modification is found at serine 631. The tract at residues glutamate 710–valine 975 is condensation 1. The segment at threonine 1169–arginine 1563 is adenylation 2. In terms of domain architecture, Carrier 2 spans proline 1677–alanine 1756. The residue at position 1714 (serine 1714) is an O-(pantetheine 4'-phosphoryl)serine. Positions histidine 1814–serine 2069 are condensation 2.

The protein belongs to the NRP synthetase family.

The enzyme catalyses L-proline + L-tryptophan + 2 ATP = brevianamide F + 2 AMP + 2 diphosphate + 2 H(+). It participates in mycotoxin biosynthesis. In terms of biological role, nonribosomal peptide synthetase; part of the gene cluster that mediates the biosynthesis of fumitremorgins, indole alkaloids that carry not only intriguing chemical structures, but also interesting biological and pharmacological activities. The biosynthesis of fumitremorgin-type alkaloids begins by condensation of the two amino acids L-tryptophan and L-proline to brevianamide F, catalyzed by the non-ribosomal peptide synthetase ftmA. Brevianamide F is then prenylated by the prenyltransferase ftmPT1/ftmB in the presence of dimethylallyl diphosphate, resulting in the formation of tryprostatin B. The three cytochrome P450 monooxygenases, ftmP450-1/ftmC, ftmP450-2/ftmE and ftmP450-3/FtmG, are responsible for the conversion of tryprostatin B to 6-hydroxytryprostatin B, tryprostatin A to fumitremorgin C and fumitremorgin C to 12,13-dihydroxyfumitremorgin C, respectively. The putative methyltransferase ftmMT/ftmD is expected for the conversion of 6-hydroxytryprostatin B to tryprostatin A. FtmPT2/FtmH catalyzes the prenylation of 12,13-dihydroxyfumitre-morgin C in the presence of dimethylallyl diphosphate, resulting in the formation of fumitremorgin B. Fumitremorgin B is further converted to verruculogen by ftmOx1/ftmF via the insertion of an endoperoxide bond between the two prenyl moieties. In some fungal species, verruculogen is further converted to fumitremorgin A, but the enzymes involved in this step have not been identified yet. This is Nonribosomal peptide synthetase 13 from Aspergillus fumigatus (strain ATCC MYA-4609 / CBS 101355 / FGSC A1100 / Af293) (Neosartorya fumigata).